A 481-amino-acid polypeptide reads, in one-letter code: Arf-GAP domain and FG repeat-containing protein 2 (481 aa).

Residues 27-153 (EVWCRRVREL…WYVPPDQVKG (127 aa)) form the Arf-GAP domain. The C4-type zinc-finger motif lies at 47-70 (CFECAQRGVTYVDITVGSFVCTTC). 3 disordered regions span residues 150-220 (QVKG…SVKK), 271-309 (SSVF…APAS), and 431-481 (QQNG…NPFL). Polar residues predominate over residues 157–166 (TKGSASTPVQ). Lys-173 is subject to N6-acetyllysine. Polar residues-rich tracts occupy residues 188-210 (VAAS…ARST), 283-298 (ASFQ…SQGT), and 454-481 (AGIS…NPFL).

As to quaternary structure, interacts with EPS15R.

In Homo sapiens (Human), this protein is Arf-GAP domain and FG repeat-containing protein 2 (AGFG2).